Here is a 216-residue protein sequence, read N- to C-terminus: 3-keto-L-gulonate-6-phosphate decarboxylase UlaD (216 aa).

A substrate-binding site is contributed by Asp11. The Mg(2+) site is built by Glu33 and Asp62. Arg192 contacts substrate.

It belongs to the HPS/KGPDC family. KGPDC subfamily. As to quaternary structure, homodimer. It depends on Mg(2+) as a cofactor.

The catalysed reaction is 3-dehydro-L-gulonate 6-phosphate + H(+) = L-xylulose 5-phosphate + CO2. It functions in the pathway cofactor degradation; L-ascorbate degradation; D-xylulose 5-phosphate from L-ascorbate: step 2/4. Its function is as follows. Catalyzes the decarboxylation of 3-keto-L-gulonate-6-P into L-xylulose-5-P. Is involved in the anaerobic L-ascorbate utilization. This Shigella dysenteriae serotype 1 (strain Sd197) protein is 3-keto-L-gulonate-6-phosphate decarboxylase UlaD.